The sequence spans 185 residues: Ribosome-recycling factor (185 aa).

It belongs to the RRF family.

The protein resides in the cytoplasm. Its function is as follows. Responsible for the release of ribosomes from messenger RNA at the termination of protein biosynthesis. May increase the efficiency of translation by recycling ribosomes from one round of translation to another. The protein is Ribosome-recycling factor of Bacillus cereus (strain B4264).